The chain runs to 202 residues: Transcription antitermination protein NusB (202 aa).

The segment covering 1–11 (MTEERTADNKA) has biased composition (basic and acidic residues). 2 disordered regions span residues 1-21 (MTEE…KRHG) and 169-202 (SAAK…SDEA).

The protein belongs to the NusB family.

In terms of biological role, involved in transcription antitermination. Required for transcription of ribosomal RNA (rRNA) genes. Binds specifically to the boxA antiterminator sequence of the ribosomal RNA (rrn) operons. The chain is Transcription antitermination protein NusB from Corynebacterium jeikeium (strain K411).